A 467-amino-acid chain; its full sequence is Asparagine--tRNA ligase (467 aa).

This sequence belongs to the class-II aminoacyl-tRNA synthetase family. In terms of assembly, homodimer.

It localises to the cytoplasm. The catalysed reaction is tRNA(Asn) + L-asparagine + ATP = L-asparaginyl-tRNA(Asn) + AMP + diphosphate + H(+). This is Asparagine--tRNA ligase from Legionella pneumophila (strain Lens).